The primary structure comprises 269 residues: MPRPRKRFAQHWLKSQAVLRQIIAAAKIQGCDRILEIGPGRGVLTRELLAQAQSVVSVELDRDLCKSLRHTFNDQENFTLLELDFLNLDVAAELTEPLPNKVVANIPYNITSPILSKLLGRIDAPAQPVYETVVLLIQKEVADRLVAEPGSKIFNGLSVRSQYLADCELICPVPASAFKPAPKVESAVVRLTPRPYPQPVQNPQWLSTLLKVGFSSRRKMLRNNLKSLVDRDQLSECLNTLNISLQARAEDLSVTQWIALSDSVHPSQV.

Histidine 11, leucine 13, glycine 38, glutamate 59, aspartate 84, and asparagine 105 together coordinate S-adenosyl-L-methionine.

Belongs to the class I-like SAM-binding methyltransferase superfamily. rRNA adenine N(6)-methyltransferase family. RsmA subfamily.

It is found in the cytoplasm. The enzyme catalyses adenosine(1518)/adenosine(1519) in 16S rRNA + 4 S-adenosyl-L-methionine = N(6)-dimethyladenosine(1518)/N(6)-dimethyladenosine(1519) in 16S rRNA + 4 S-adenosyl-L-homocysteine + 4 H(+). Its function is as follows. Specifically dimethylates two adjacent adenosines (A1518 and A1519) in the loop of a conserved hairpin near the 3'-end of 16S rRNA in the 30S particle. May play a critical role in biogenesis of 30S subunits. This chain is Ribosomal RNA small subunit methyltransferase A, found in Acaryochloris marina (strain MBIC 11017).